A 341-amino-acid polypeptide reads, in one-letter code: Serine proteinase inhibitor 2 (341 aa).

Belongs to the serpin family. Poxviruses subfamily.

Its subcellular location is the host cytoplasm. Its function is as follows. Viral serpin that inhibits both cysteine and serine proteinases involved in the regulation of host inflammatory and apoptosis processes. Major anti-apoptotic protein which inhibits both intrinsic and extrinsic pathways and strongly cleaves host CASP1 and CASP8 but is a rather poor inhibitor of host CASP3. Prevents the proteolytic activity of host interleukin-1-beta converting enzyme (ICE) and ICE-like enzymes. Can also block apoptosis through host tumor necrosis factor (TNF) receptor. The polypeptide is Serine proteinase inhibitor 2 (OPG199) (Bos taurus (Bovine)).